The following is a 114-amino-acid chain: Probable non-functional T cell receptor beta variable 5-3 (114 aa).

The signal sequence occupies residues 1–21; sequence MGPGLLCWELLYLLGAGPVEA. Residues 22–114 form the Ig-like domain; it reads GVTQSPTHLI…SALYLCARSL (93 aa). Cysteine 42 and cysteine 110 are joined by a disulfide. An N-linked (GlcNAc...) asparagine glycan is attached at asparagine 96.

As to quaternary structure, alpha-beta TR is a heterodimer composed of an alpha and beta chain; disulfide-linked. The alpha-beta TR is associated with the transmembrane signaling CD3 coreceptor proteins to form the TR-CD3 (TcR or TCR). The assembly of alpha-beta TR heterodimers with CD3 occurs in the endoplasmic reticulum where a single alpha-beta TR heterodimer associates with one CD3D-CD3E heterodimer, one CD3G-CD3E heterodimer and one CD247 homodimer forming a stable octameric structure. CD3D-CD3E and CD3G-CD3E heterodimers preferentially associate with TR alpha and TR beta chains, respectively. The association of the CD247 homodimer is the last step of TcR assembly in the endoplasmic reticulum and is required for transport to the cell surface.

The protein localises to the cell membrane. In terms of biological role, probable non-functional open reading frame (ORF) of V region of the variable domain of T cell receptor (TR) beta chain. Non-functional ORF generally cannot participate in the synthesis of a productive T cell receptor (TR) chain due to altered V-(D)-J or switch recombination and/or splicing site (at mRNA level) and/or conserved amino acid change (protein level). Alpha-beta T cell receptors are antigen specific receptors which are essential to the immune response and are present on the cell surface of T lymphocytes. Recognize peptide-major histocompatibility (MH) (pMH) complexes that are displayed by antigen presenting cells (APC), a prerequisite for efficient T cell adaptive immunity against pathogens. Binding of alpha-beta TR to pMH complex initiates TR-CD3 clustering on the cell surface and intracellular activation of LCK that phosphorylates the ITAM motifs of CD3G, CD3D, CD3E and CD247 enabling the recruitment of ZAP70. In turn ZAP70 phosphorylates LAT, which recruits numerous signaling molecules to form the LAT signalosome. The LAT signalosome propagates signal branching to three major signaling pathways, the calcium, the mitogen-activated protein kinase (MAPK) kinase and the nuclear factor NF-kappa-B (NF-kB) pathways, leading to the mobilization of transcription factors that are critical for gene expression and essential for T cell growth and differentiation. The T cell repertoire is generated in the thymus, by V-(D)-J rearrangement. This repertoire is then shaped by intrathymic selection events to generate a peripheral T cell pool of self-MH restricted, non-autoaggressive T cells. Post-thymic interaction of alpha-beta TR with the pMH complexes shapes TR structural and functional avidity. The chain is Probable non-functional T cell receptor beta variable 5-3 from Homo sapiens (Human).